Reading from the N-terminus, the 582-residue chain is External alternative NAD(P)H-ubiquinone oxidoreductase B2, mitochondrial (582 aa).

The transit peptide at 1 to 38 (MRNFSVFERFSKAFKDHPSLTRILVVSTISGGGLIAYS) directs the protein to the mitochondrion. 60–90 (KVVLLGTGWAGTSFLKNLNNSQYEVQIISPR) provides a ligand contact to FAD. An NAD(+)-binding site is contributed by 223-259 (LHFVVVGGGPTGVEFAAELHDFVTEDLVSLYPRAKGS). The EF-hand domain occupies 379–414 (KVMEDVSAIFSKADKDKSGTLTLKEFQEAMDDICVR). 5 residues coordinate Ca(2+): aspartate 392, aspartate 394, serine 396, threonine 398, and glutamate 403. A Microbody targeting signal motif is present at residues 573-582 (FIFGRDSSSI).

The protein belongs to the NADH dehydrogenase family. It depends on FAD as a cofactor. In terms of tissue distribution, mostly expressed in seedlings and roots and, to a lower extent, in cotyledons, leaves, stems, buds and flowers.

The protein localises to the mitochondrion inner membrane. It is found in the peroxisome. The catalysed reaction is a quinone + NADH + H(+) = a quinol + NAD(+). It carries out the reaction a ubiquinone + NADH + H(+) = a ubiquinol + NAD(+). NADPH oxidase activity is stimulated by calcium ions. Functionally, alternative NADH-ubiquinone oxidoreductase which catalyzes the oxidation of mitochondrial NADH does not translocate protons across the inner mitochondrial membrane. Calcium-dependent NAD(P)H dehydrogenase; more efficient on NADH. Binds calcium ions. The protein is External alternative NAD(P)H-ubiquinone oxidoreductase B2, mitochondrial (NDB2) of Arabidopsis thaliana (Mouse-ear cress).